A 396-amino-acid polypeptide reads, in one-letter code: Mannonate dehydratase (396 aa).

Belongs to the mannonate dehydratase family. Fe(2+) is required as a cofactor. Requires Mn(2+) as cofactor.

It carries out the reaction D-mannonate = 2-dehydro-3-deoxy-D-gluconate + H2O. It functions in the pathway carbohydrate metabolism; pentose and glucuronate interconversion. Functionally, catalyzes the dehydration of D-mannonate. In Serratia proteamaculans (strain 568), this protein is Mannonate dehydratase.